The primary structure comprises 173 residues: Large ribosomal subunit protein bL9 (173 aa).

This sequence belongs to the bacterial ribosomal protein bL9 family.

Binds to the 23S rRNA. This chain is Large ribosomal subunit protein bL9, found in Rickettsia bellii (strain RML369-C).